The sequence spans 145 residues: Peptide methionine sulfoxide reductase MsrB (145 aa).

A MsrB domain is found at 4–127; the sequence is SEELKQRIGD…NSAALKFIPY (124 aa). Catalysis depends on Cys-116, which acts as the Nucleophile.

Belongs to the MsrB Met sulfoxide reductase family.

It catalyses the reaction L-methionyl-[protein] + [thioredoxin]-disulfide + H2O = L-methionyl-(R)-S-oxide-[protein] + [thioredoxin]-dithiol. This Streptococcus pyogenes serotype M6 (strain ATCC BAA-946 / MGAS10394) protein is Peptide methionine sulfoxide reductase MsrB.